Consider the following 89-residue polypeptide: MRAVLTVIGKDNVGIVAGVSNKLAELNINIVDVSQTIMDGYFTMMMMCDISQITKEFDEVKTELTGKGEELQVKIHIQREEIFNAMHKL.

The 75-residue stretch at 4–78 (VLTVIGKDNV…EELQVKIHIQ (75 aa)) folds into the ACT domain.

It belongs to the UPF0237 family.

The chain is UPF0237 protein lin0537 from Listeria innocua serovar 6a (strain ATCC BAA-680 / CLIP 11262).